Here is a 491-residue protein sequence, read N- to C-terminus: Chromosomal replication initiator protein DnaA (491 aa).

The tract at residues 1–69 is domain I, interacts with DnaA modulators; the sequence is MTTWNKCLKK…TIQEFHDGDL (69 aa). The domain II stretch occupies residues 69-154; it reads LLIEYSNKKF…KDDQEYSFGL (86 aa). The disordered stretch occupies residues 106–126; it reads DSEETSLNQEPKKSQKKLSSK. The segment at 155-371 is domain III, AAA+ region; that stretch reads PLKEKYVFDS…GALNRVLTTS (217 aa). ATP contacts are provided by G199, G201, K202, and T203. Positions 372 to 491 are domain IV, binds dsDNA; it reads KFNHKDPTIE…YELLLDKISR (120 aa).

Belongs to the DnaA family. In terms of assembly, oligomerizes as a right-handed, spiral filament on DNA at oriC.

The protein localises to the cytoplasm. In terms of biological role, plays an essential role in the initiation and regulation of chromosomal replication. ATP-DnaA binds to the origin of replication (oriC) to initiate formation of the DNA replication initiation complex once per cell cycle. Binds the DnaA box (a 9 base pair repeat at the origin) and separates the double-stranded (ds)DNA. Forms a right-handed helical filament on oriC DNA; dsDNA binds to the exterior of the filament while single-stranded (ss)DNA is stabiized in the filament's interior. The ATP-DnaA-oriC complex binds and stabilizes one strand of the AT-rich DNA unwinding element (DUE), permitting loading of DNA polymerase. After initiation quickly degrades to an ADP-DnaA complex that is not apt for DNA replication. Binds acidic phospholipids. This chain is Chromosomal replication initiator protein DnaA, found in Francisella philomiragia subsp. philomiragia (strain ATCC 25017 / CCUG 19701 / FSC 153 / O#319-036).